The following is a 205-amino-acid chain: D-alanine--D-alanine ligase (205 aa).

The ATP-grasp domain maps to 111–205; sequence KHVLKSLGID…LGRAIGTMEF (95 aa). Residue 139–190 coordinates ATP; the sequence is MPYPFVIKPICGGSTIGVHAIFSRSEYLDLSVHADALEGRMLVEEYIPGQEV.

It belongs to the D-alanine--D-alanine ligase family. Mg(2+) is required as a cofactor. The cofactor is Mn(2+).

It localises to the cytoplasm. The enzyme catalyses 2 D-alanine + ATP = D-alanyl-D-alanine + ADP + phosphate + H(+). The protein operates within cell wall biogenesis; peptidoglycan biosynthesis. Its function is as follows. Cell wall formation. This is D-alanine--D-alanine ligase (ddl) from Anaplasma centrale.